The chain runs to 397 residues: Probable protein phosphatase 2C 74 (397 aa).

Residues 133–391 (GFWVASRRGL…DDVTVMVVDL (259 aa)) form the PPM-type phosphatase domain. The Mn(2+) site is built by Asp170, Gly171, Asp343, and Asp382.

Belongs to the PP2C family. Mg(2+) serves as cofactor. The cofactor is Mn(2+).

It catalyses the reaction O-phospho-L-seryl-[protein] + H2O = L-seryl-[protein] + phosphate. It carries out the reaction O-phospho-L-threonyl-[protein] + H2O = L-threonyl-[protein] + phosphate. The polypeptide is Probable protein phosphatase 2C 74 (Oryza sativa subsp. japonica (Rice)).